The primary structure comprises 279 residues: Dehydrogenase/reductase SDR family member 4 (279 aa).

Residue 37–61 participates in NADP(+) binding; that stretch reads LVTASTDGIGLAIARRLAEDGAHVV. Lys93 carries the post-translational modification N6-acetyllysine; alternate. Lys93 bears the N6-succinyllysine; alternate mark. Lys106 is subject to N6-acetyllysine. Residue Ser170 participates in substrate binding. Tyr183 (proton acceptor) is an active-site residue. Lys187 is an NADP(+) binding site. Lys217 is subject to N6-acetyllysine; alternate. Lys217 carries the N6-succinyllysine; alternate modification. The residue at position 221 (Ser221) is a Phosphoserine. An N6-succinyllysine mark is found at Lys228 and Lys235. Positions 277 to 279 match the Peroxisomal targeting signal motif; sequence SRL.

It belongs to the short-chain dehydrogenases/reductases (SDR) family. In terms of assembly, homotetramer.

The protein resides in the peroxisome. The catalysed reaction is a secondary alcohol + NADP(+) = a ketone + NADPH + H(+). It carries out the reaction 3alpha-hydroxy-5beta-pregnan-20-one + NADP(+) = 5beta-pregnan-3,20-dione + NADPH + H(+). The enzyme catalyses 5beta-dihydrotestosterone + NADPH + H(+) = 5beta-androstane-3alpha,17beta-diol + NADP(+). It catalyses the reaction all-trans-retinol + NADP(+) = all-trans-retinal + NADPH + H(+). The catalysed reaction is isatin + NADPH + H(+) = 3-hydroxyindolin-2-one + NADP(+). Functionally, NADPH-dependent oxidoreductase which catalyzes the reduction of a variety of compounds bearing carbonyl groups including ketosteroids, alpha-dicarbonyl compounds, aldehydes, aromatic ketones and quinones. Reduces all-trans-retinal and 9-cis retinal. Reduces 3-ketosteroids and benzil into 3alpha-hydroxysteroids and S-benzoin, respectively, in contrast to the stereoselectivity of primates DHRS4s which produce 3beta-hydroxysteroids and R-benzoin. In the reverse reaction, catalyzes the NADP-dependent oxidation of 3alpha-hydroxysteroids and alcohol, but with much lower efficiency. Involved in the metabolism of 3alpha-hydroxysteroids, retinoid, isatin and xenobiotic carbonyl compounds. The polypeptide is Dehydrogenase/reductase SDR family member 4 (Dhrs4) (Rattus norvegicus (Rat)).